The sequence spans 939 residues: AP-2 complex subunit alpha (939 aa).

Residues 623 to 633 are compositionally biased toward basic and acidic residues; that stretch reads RVPENEIRESK. A disordered region spans residues 623–660; that stretch reads RVPENEIRESKSPAPTSGPGSVLQNNVHVNNSHSKLNN. The span at 635 to 660 shows a compositional bias: polar residues; the sequence is PAPTSGPGSVLQNNVHVNNSHSKLNN.

The protein belongs to the adapter complexes large subunit family. Adaptor protein complex 2 (AP-2) is a heterotetramer composed of two large adaptins (alpha-type and beta-type subunits), a medium adaptin (mu-type subunit AP50) and a small adaptin (sigma-type subunit AP17).

Its subcellular location is the cell membrane. The protein localises to the membrane. It localises to the coated pit. Its function is as follows. Adaptins are components of the adapter complexes which link clathrin to receptors in coated vesicles. Clathrin-associated protein complexes are believed to interact with the cytoplasmic tails of membrane proteins, leading to their selection and concentration. Alpha adaptin is a subunit of the plasma membrane adapter. The polypeptide is AP-2 complex subunit alpha (Drosophila pseudoobscura pseudoobscura (Fruit fly)).